Reading from the N-terminus, the 549-residue chain is Cilia- and flagella-associated protein 45 (549 aa).

Positions Met1–Thr27 are disordered. 2 coiled-coil regions span residues Lys119 to Val232 and Ile259 to Gln393. Positions Arg391 to Ala416 are disordered.

Belongs to the CFAP45 family. Microtubule inner protein component of sperm flagellar doublet microtubules. Interacts with AK8; dimerization with AK8 may create a cavity at the interface of the dimer that can accommodate AMP. Interacts with CFAP52. Interacts with ENKUR. Directly interacts with DNALI1. Interacts with DNAH11. Interacts with DNAI1. Expressed in trachea multiciliated cells.

It localises to the cytoplasm. The protein resides in the cytoskeleton. It is found in the cilium axoneme. Its subcellular location is the flagellum axoneme. The protein localises to the cell projection. It localises to the cilium. The protein resides in the flagellum. Microtubule inner protein (MIP) part of the dynein-decorated doublet microtubules (DMTs) in cilia axoneme, which is required for motile cilia beating. It is an AMP-binding protein that may facilitate dynein ATPase-dependent ciliary and flagellar beating via adenine nucleotide homeostasis. May function as a donor of AMP to AK8 and hence promote ADP production. The sequence is that of Cilia- and flagella-associated protein 45 from Bos taurus (Bovine).